The primary structure comprises 844 residues: Eukaryotic translation elongation factor 2 (844 aa).

In terms of domain architecture, tr-type G spans 17-348 (RNIRNMSVIA…MIAIHLPSPV (332 aa)). Position 26–33 (26–33 (AHVDHGKS)) interacts with GTP. Phosphothreonine occurs at positions 57 and 59. Residues 162 to 165 (NKMD) and 219 to 221 (SGL) each bind GTP. His701 bears the Diphthamide mark.

This sequence belongs to the TRAFAC class translation factor GTPase superfamily. Classic translation factor GTPase family. EF-G/EF-2 subfamily. In terms of processing, phosphorylation by EF-2 kinase completely inactivates eEF2.

Its subcellular location is the cytoplasm. The catalysed reaction is GTP + H2O = GDP + phosphate + H(+). Functionally, catalyzes the GTP-dependent ribosomal translocation step during translation elongation. During this step, the ribosome changes from the pre-translocational (PRE) to the post-translocational (POST) state as the newly formed A-site-bound peptidyl-tRNA and P-site-bound deacylated tRNA move to the P and E sites, respectively. Catalyzes the coordinated movement of the two tRNA molecules, the mRNA and conformational changes in the ribosome. The sequence is that of Eukaryotic translation elongation factor 2 from Drosophila melanogaster (Fruit fly).